The chain runs to 467 residues: Methylenetetrahydrofolate--tRNA-(uracil-5-)-methyltransferase TrmFO (467 aa).

An FAD-binding site is contributed by 10–15; that stretch reads GGGMAG.

The protein belongs to the MnmG family. TrmFO subfamily. Requires FAD as cofactor.

It is found in the cytoplasm. It catalyses the reaction uridine(54) in tRNA + (6R)-5,10-methylene-5,6,7,8-tetrahydrofolate + NADH + H(+) = 5-methyluridine(54) in tRNA + (6S)-5,6,7,8-tetrahydrofolate + NAD(+). It carries out the reaction uridine(54) in tRNA + (6R)-5,10-methylene-5,6,7,8-tetrahydrofolate + NADPH + H(+) = 5-methyluridine(54) in tRNA + (6S)-5,6,7,8-tetrahydrofolate + NADP(+). Catalyzes the folate-dependent formation of 5-methyl-uridine at position 54 (M-5-U54) in all tRNAs. This is Methylenetetrahydrofolate--tRNA-(uracil-5-)-methyltransferase TrmFO from Hyphomonas neptunium (strain ATCC 15444).